We begin with the raw amino-acid sequence, 490 residues long: Bifunctional protein HldE (490 aa).

The segment at 1-330 (MSRFDTLLQS…RKILPHASLA (330 aa)) is ribokinase. Position 205–208 (205–208 (NRKE)) interacts with ATP. The active site involves D275. Positions 358-490 (FTNGCFDILH…LVEKAREGTT (133 aa)) are cytidylyltransferase.

In the N-terminal section; belongs to the carbohydrate kinase PfkB family. The protein in the C-terminal section; belongs to the cytidylyltransferase family. As to quaternary structure, homodimer.

The enzyme catalyses D-glycero-beta-D-manno-heptose 7-phosphate + ATP = D-glycero-beta-D-manno-heptose 1,7-bisphosphate + ADP + H(+). The catalysed reaction is D-glycero-beta-D-manno-heptose 1-phosphate + ATP + H(+) = ADP-D-glycero-beta-D-manno-heptose + diphosphate. The protein operates within nucleotide-sugar biosynthesis; ADP-L-glycero-beta-D-manno-heptose biosynthesis; ADP-L-glycero-beta-D-manno-heptose from D-glycero-beta-D-manno-heptose 7-phosphate: step 1/4. Its pathway is nucleotide-sugar biosynthesis; ADP-L-glycero-beta-D-manno-heptose biosynthesis; ADP-L-glycero-beta-D-manno-heptose from D-glycero-beta-D-manno-heptose 7-phosphate: step 3/4. In terms of biological role, catalyzes the phosphorylation of D-glycero-D-manno-heptose 7-phosphate at the C-1 position to selectively form D-glycero-beta-D-manno-heptose-1,7-bisphosphate. Functionally, catalyzes the ADP transfer from ATP to D-glycero-beta-D-manno-heptose 1-phosphate, yielding ADP-D-glycero-beta-D-manno-heptose. This Rhodopseudomonas palustris (strain BisB5) protein is Bifunctional protein HldE.